The primary structure comprises 699 residues: PTS system glucose-specific EIICBA component (699 aa).

Residues 3 to 424 enclose the PTS EIIC type-1 domain; it reads KALFGVLQKI…FNLKTPGRED (422 aa). Helical transmembrane passes span 16–36, 66–86, 89–109, 139–159, 180–200, 233–253, 283–303, 313–333, 338–358, 365–385, and 388–408; these read LMLP…GNAM, IVFD…LANG, VAGI…SAVL, IPTL…AALL, FVPI…LVIW, LIPF…FFSY, FMTG…LAIY, LVAG…ITEP, FLFV…LSFM, VKIG…GILP, and TAWW…YFGF. The region spanning 439-520 is the PTS EIIB type-1 domain; that stretch reads GDLPYEILQA…QDIIAGRKPR (82 aa). The active-site Phosphocysteine intermediate; for EIIB activity is C461. A PTS EIIA type-1 domain is found at 568–672; the sequence is DQVFSGKMMG…SLMTPIVFTN (105 aa). H620 serves as the catalytic Tele-phosphohistidine intermediate; for EIIA activity.

It localises to the cell membrane. It carries out the reaction N(pros)-phospho-L-histidyl-[protein] + D-glucose(out) = D-glucose 6-phosphate(in) + L-histidyl-[protein]. The enzyme catalyses D-glucosamine(out) + N(pros)-phospho-L-histidyl-[protein] = D-glucosamine 6-phosphate(in) + L-histidyl-[protein]. Its function is as follows. The phosphoenolpyruvate-dependent sugar phosphotransferase system (sugar PTS), a major carbohydrate active transport system, catalyzes the phosphorylation of incoming sugar substrates concomitantly with their translocation across the cell membrane. This system is involved in glucose transport. The system can also transport glucosamine. Functionally, in addition, plays an important role in the phosphorylation of EIIA-deficient PTS transporters. The EIIA domain can transfer a phosphoryl group to EIIA-deficient PTS transporters, enabling growth with maltose, N-acetylglucosamine, sucrose or trehalose as the sole carbon source. The chain is PTS system glucose-specific EIICBA component (ptsG) from Bacillus subtilis (strain 168).